A 508-amino-acid chain; its full sequence is Steroid 17-alpha-hydroxylase/17,20 lyase (508 aa).

C442 is a heme binding site.

The protein belongs to the cytochrome P450 family. Heme is required as a cofactor.

The protein localises to the endoplasmic reticulum membrane. Its subcellular location is the microsome membrane. It catalyses the reaction a C21-steroid + reduced [NADPH--hemoprotein reductase] + O2 = a 17alpha-hydroxy-C21-steroid + oxidized [NADPH--hemoprotein reductase] + H2O + H(+). The enzyme catalyses progesterone + reduced [NADPH--hemoprotein reductase] + O2 = 17alpha-hydroxyprogesterone + oxidized [NADPH--hemoprotein reductase] + H2O + H(+). It carries out the reaction pregnenolone + reduced [NADPH--hemoprotein reductase] + O2 = 17alpha-hydroxypregnenolone + oxidized [NADPH--hemoprotein reductase] + H2O + H(+). The catalysed reaction is 17alpha-hydroxyprogesterone + reduced [NADPH--hemoprotein reductase] + O2 = androst-4-ene-3,17-dione + acetate + oxidized [NADPH--hemoprotein reductase] + H2O + 2 H(+). It catalyses the reaction 17alpha-hydroxyprogesterone + reduced [NADPH--hemoprotein reductase] + O2 = 16alpha,17alpha-dihydroxyprogesterone + oxidized [NADPH--hemoprotein reductase] + H2O + H(+). The enzyme catalyses 16alpha,17alpha-dihydroxyprogesterone + reduced [NADPH--hemoprotein reductase] + O2 = 6beta,16alpha,17alpha-trihydroxyprogesterone + oxidized [NADPH--hemoprotein reductase] + H2O + H(+). It carries out the reaction 17alpha-hydroxypregnenolone + reduced [NADPH--hemoprotein reductase] + O2 = 3beta-hydroxyandrost-5-en-17-one + acetate + oxidized [NADPH--hemoprotein reductase] + H2O + 2 H(+). The catalysed reaction is 16alpha,17alpha-dihydroxypregnenolone + reduced [NADPH--hemoprotein reductase] + O2 = 3beta,16alpha-dihydroxy-androst-5-en-17-one + acetate + oxidized [NADPH--hemoprotein reductase] + H2O + 2 H(+). It catalyses the reaction 3beta-hydroxyandrost-5-en-17-one + reduced [NADPH--hemoprotein reductase] + O2 = 3beta,16alpha-dihydroxy-androst-5-en-17-one + oxidized [NADPH--hemoprotein reductase] + H2O + H(+). The enzyme catalyses androst-4-ene-3,17-dione + reduced [NADPH--hemoprotein reductase] + O2 = 16alpha-hydroxyandrost-4-ene-3,17-dione + oxidized [NADPH--hemoprotein reductase] + H2O + H(+). Its pathway is steroid hormone biosynthesis. It functions in the pathway steroid biosynthesis; glucocorticoid biosynthesis. Its activity is regulated as follows. Regulated predominantly by intracellular cAMP levels. The 17,20-lyase activity is stimulated by cytochrome b5, which acts as an allosteric effector increasing the Vmax of the lyase activity. In terms of biological role, a cytochrome P450 monooxygenase involved in corticoid and androgen biosynthesis. Catalyzes 17-alpha hydroxylation of C21 steroids, which is common for both pathways. A second oxidative step, required only for androgen synthesis, involves an acyl-carbon cleavage. The 17-alpha hydroxy intermediates, as part of adrenal glucocorticoids biosynthesis pathway, are precursors of cortisol. Hydroxylates steroid hormones, pregnenolone and progesterone to form 17-alpha hydroxy metabolites, followed by the cleavage of the C17-C20 bond to form C19 steroids, dehydroepiandrosterone (DHEA) and androstenedione. Has 16-alpha hydroxylase activity. Catalyzes 16-alpha hydroxylation of 17-alpha hydroxy pregnenolone, followed by the cleavage of the C17-C20 bond to form 16-alpha-hydroxy DHEA. Also 16-alpha hydroxylates androgens, relevant for estriol synthesis. Mechanistically, uses molecular oxygen inserting one oxygen atom into a substrate, and reducing the second into a water molecule, with two electrons provided by NADPH via cytochrome P450 reductase (CPR; NADPH-ferrihemoprotein reductase). The chain is Steroid 17-alpha-hydroxylase/17,20 lyase (CYP17A1) from Equus caballus (Horse).